A 216-amino-acid chain; its full sequence is Adenylate kinase (216 aa).

10 to 15 is a binding site for ATP; sequence GAGKGT. The NMP stretch occupies residues 30–59; that stretch reads STGDMFRAAMKAETEMGLQAKSFIDKGALV. AMP-binding positions include Thr31, Arg36, 57-59, 85-88, and Gln92; these read ALV and GFPR. The interval 126–163 is LID; it reads GRRICKECGATYHLEFNAPAKADVCDKCGGELYQRSDD. Arg127 serves as a coordination point for ATP. Zn(2+) is bound by residues Cys130 and Cys133. Residue 136-137 participates in ATP binding; it reads TY. Residues Cys150 and Cys153 each contribute to the Zn(2+) site. 2 residues coordinate AMP: Arg160 and Arg171. ATP is bound at residue Gln199.

The protein belongs to the adenylate kinase family. As to quaternary structure, monomer.

It is found in the cytoplasm. It catalyses the reaction AMP + ATP = 2 ADP. It participates in purine metabolism; AMP biosynthesis via salvage pathway; AMP from ADP: step 1/1. Catalyzes the reversible transfer of the terminal phosphate group between ATP and AMP. Plays an important role in cellular energy homeostasis and in adenine nucleotide metabolism. The chain is Adenylate kinase from Bacillus anthracis (strain A0248).